Consider the following 178-residue polypeptide: Acireductone dioxygenase (178 aa).

Positions 100, 102, 106, and 145 each coordinate Fe(2+). Ni(2+)-binding residues include His100, His102, Glu106, and His145.

The protein belongs to the acireductone dioxygenase (ARD) family. As to quaternary structure, monomer. Fe(2+) is required as a cofactor. Ni(2+) serves as cofactor.

The enzyme catalyses 1,2-dihydroxy-5-(methylsulfanyl)pent-1-en-3-one + O2 = 3-(methylsulfanyl)propanoate + CO + formate + 2 H(+). It carries out the reaction 1,2-dihydroxy-5-(methylsulfanyl)pent-1-en-3-one + O2 = 4-methylsulfanyl-2-oxobutanoate + formate + 2 H(+). It participates in amino-acid biosynthesis; L-methionine biosynthesis via salvage pathway; L-methionine from S-methyl-5-thio-alpha-D-ribose 1-phosphate: step 5/6. Its function is as follows. Catalyzes 2 different reactions between oxygen and the acireductone 1,2-dihydroxy-3-keto-5-methylthiopentene (DHK-MTPene) depending upon the metal bound in the active site. Fe-containing acireductone dioxygenase (Fe-ARD) produces formate and 2-keto-4-methylthiobutyrate (KMTB), the alpha-ketoacid precursor of methionine in the methionine recycle pathway. Ni-containing acireductone dioxygenase (Ni-ARD) produces methylthiopropionate, carbon monoxide and formate, and does not lie on the methionine recycle pathway. This chain is Acireductone dioxygenase, found in Bacillus velezensis (strain DSM 23117 / BGSC 10A6 / LMG 26770 / FZB42) (Bacillus amyloliquefaciens subsp. plantarum).